A 182-amino-acid polypeptide reads, in one-letter code: Ribosome-recycling factor (182 aa).

Belongs to the RRF family.

The protein resides in the cytoplasm. In terms of biological role, responsible for the release of ribosomes from messenger RNA at the termination of protein biosynthesis. May increase the efficiency of translation by recycling ribosomes from one round of translation to another. In Synechococcus sp. (strain WH7803), this protein is Ribosome-recycling factor.